Reading from the N-terminus, the 292-residue chain is Ferric aerobactin-binding protein VatD (292 aa).

Residues 1–12 (MLSAALAFNSYA) form the signal peptide. The 263-residue stretch at 30–292 (KVVALDWVLT…HITGRLTQPQ (263 aa)) folds into the Fe/B12 periplasmic-binding domain. Residues W61, R77, Y118, R185, W213, F215, W269, and F271 each contribute to the desferrioxamine B site.

This sequence belongs to the bacterial solute-binding protein 8 family. In terms of assembly, the complex is composed of two ATP-binding proteins (VatC), two transmembrane proteins (VatB) and a solute-binding protein (VatD).

It localises to the periplasm. Its function is as follows. Part of the ABC transporter complex VatCDB involved in the import of iron(3+)-complexed aerobactin, a citrate-hydroxamate siderophore produced by other bacteria. Binds the iron(3+)-aerobactin complex and transfers it to the membrane-bound permease. Functions in the import of iron(3+)-complexed vulnibactin, a catecholate siderophore synthesized by V.vulnificus, in the absence of FatB. The chain is Ferric aerobactin-binding protein VatD from Vibrio vulnificus.